An 83-amino-acid polypeptide reads, in one-letter code: Cytochrome b559 subunit alpha (83 aa).

Residues 21-35 (VIHSITIPSLFIAGW) form a helical membrane-spanning segment. His23 contributes to the heme binding site.

It belongs to the PsbE/PsbF family. Heterodimer of an alpha subunit and a beta subunit. PSII is composed of 1 copy each of membrane proteins PsbA, PsbB, PsbC, PsbD, PsbE, PsbF, PsbH, PsbI, PsbJ, PsbK, PsbL, PsbM, PsbT, PsbX, PsbY, PsbZ, Psb30/Ycf12, at least 3 peripheral proteins of the oxygen-evolving complex and a large number of cofactors. It forms dimeric complexes. It depends on heme b as a cofactor.

The protein resides in the plastid. It is found in the chloroplast thylakoid membrane. Functionally, this b-type cytochrome is tightly associated with the reaction center of photosystem II (PSII). PSII is a light-driven water:plastoquinone oxidoreductase that uses light energy to abstract electrons from H(2)O, generating O(2) and a proton gradient subsequently used for ATP formation. It consists of a core antenna complex that captures photons, and an electron transfer chain that converts photonic excitation into a charge separation. This Citrus sinensis (Sweet orange) protein is Cytochrome b559 subunit alpha.